The following is a 407-amino-acid chain: 1-deoxy-D-xylulose 5-phosphate reductoisomerase (407 aa).

NADPH contacts are provided by Thr25, Gly26, Ser27, Ile28, Asn53, and Asn136. 1-deoxy-D-xylulose 5-phosphate is bound at residue Lys137. Glu138 is a binding site for NADPH. Asp162 is a binding site for Mn(2+). 1-deoxy-D-xylulose 5-phosphate-binding residues include Ser163, Glu164, Ser188, and His211. Position 164 (Glu164) interacts with Mn(2+). Gly217 is an NADPH binding site. 1-deoxy-D-xylulose 5-phosphate is bound by residues Ser224, Asn229, Lys230, and Glu233. Residue Glu233 coordinates Mn(2+).

It belongs to the DXR family. It depends on Mg(2+) as a cofactor. Requires Mn(2+) as cofactor.

It catalyses the reaction 2-C-methyl-D-erythritol 4-phosphate + NADP(+) = 1-deoxy-D-xylulose 5-phosphate + NADPH + H(+). The protein operates within isoprenoid biosynthesis; isopentenyl diphosphate biosynthesis via DXP pathway; isopentenyl diphosphate from 1-deoxy-D-xylulose 5-phosphate: step 1/6. Catalyzes the NADPH-dependent rearrangement and reduction of 1-deoxy-D-xylulose-5-phosphate (DXP) to 2-C-methyl-D-erythritol 4-phosphate (MEP). The sequence is that of 1-deoxy-D-xylulose 5-phosphate reductoisomerase from Bradyrhizobium sp. (strain ORS 278).